We begin with the raw amino-acid sequence, 175 residues long: Protein TWIN SISTER of FT (175 aa).

It belongs to the phosphatidylethanolamine-binding protein family.

It is found in the cytoplasm. Its function is as follows. May form complexes with phosphorylated ligands by interfering with kinases and their effectors. The sequence is that of Protein TWIN SISTER of FT (TSF) from Arabidopsis thaliana (Mouse-ear cress).